Reading from the N-terminus, the 316-residue chain is MSGRSPKAPRAPSSTRVGGLVVAAHGRHYLVAPDDGGAMLQCFPRGKRSEVAVGDRVVYELASADQGVIVEIGERRNLLYRSDQYKSKLFAANLDQLLVVLATEPHFSEDLLGRALVAAEANELKPLIVLNKTDVTDALEGARKRLEPYRALGYTVVEVSIKMQPEAARAALIEHLQGHSTLLLGQSGMGKSTLVNLLIPDAEVATREISTALNSGRHTTTFTRLYPLPDSADGEGGALIDSPGFQEFGLHHLTEGRLERAFPEFRPLLPNCRFYNCHHLQEPGCAILEAVADGRIRRERHALYAQLVHEASQIVR.

Positions 83–248 (DQYKSKLFAA…LIDSPGFQEF (166 aa)) constitute a CP-type G domain. GTP-binding positions include 131 to 134 (NKTD) and 185 to 193 (GQSGMGKST). Zn(2+) contacts are provided by Cys272, Cys277, His279, and Cys285.

The protein belongs to the TRAFAC class YlqF/YawG GTPase family. RsgA subfamily. In terms of assembly, monomer. Associates with 30S ribosomal subunit, binds 16S rRNA. It depends on Zn(2+) as a cofactor.

The protein resides in the cytoplasm. Its function is as follows. One of several proteins that assist in the late maturation steps of the functional core of the 30S ribosomal subunit. Helps release RbfA from mature subunits. May play a role in the assembly of ribosomal proteins into the subunit. Circularly permuted GTPase that catalyzes slow GTP hydrolysis, GTPase activity is stimulated by the 30S ribosomal subunit. The protein is Small ribosomal subunit biogenesis GTPase RsgA of Paraburkholderia phytofirmans (strain DSM 17436 / LMG 22146 / PsJN) (Burkholderia phytofirmans).